The sequence spans 227 residues: Chloronitrobenzene nitroreductase (227 aa).

14–18 (RRTKR) is an FMN binding site. Residue Ser44 coordinates NADP(+). Residues 172 to 173 (GL) and Arg215 each bind FMN.

It belongs to the nitroreductase family. FMN serves as cofactor.

The enzyme catalyses N-phenylhydroxylamine + 2 NADP(+) + H2O = nitrobenzene + 2 NADPH + 2 H(+). It functions in the pathway xenobiotic degradation; nitrobenzene degradation. Its pathway is xenobiotic degradation; 4-chloronitrobenzene degradation. Involved in the biodegradation of chlorinated nitroaromatic compounds. Catalyzes the reduction of 4-chloronitrobenzene to yield 1-hydroxylamino-4-chlorobenzene. Probably also able to catalyze the two-electron reduction of nitrobenzene (NB) to produce a nitrosobenzene (NOB) intermediate, which is immediately reduced to hydroxylaminobenzene (HAB) by a second two-electron transfer. In Comamonas testosteroni (Pseudomonas testosteroni), this protein is Chloronitrobenzene nitroreductase.